The chain runs to 389 residues: tRNA(Met) cytidine acetate ligase (389 aa).

Residues isoleucine 8 to leucine 21, glycine 97, asparagine 153, and arginine 176 contribute to the ATP site.

It belongs to the TmcAL family.

It localises to the cytoplasm. It catalyses the reaction cytidine(34) in elongator tRNA(Met) + acetate + ATP = N(4)-acetylcytidine(34) in elongator tRNA(Met) + AMP + diphosphate. Functionally, catalyzes the formation of N(4)-acetylcytidine (ac(4)C) at the wobble position of elongator tRNA(Met), using acetate and ATP as substrates. First activates an acetate ion to form acetyladenylate (Ac-AMP) and then transfers the acetyl group to tRNA to form ac(4)C34. The sequence is that of tRNA(Met) cytidine acetate ligase from Lactococcus lactis subsp. lactis (strain IL1403) (Streptococcus lactis).